A 236-amino-acid polypeptide reads, in one-letter code: Mitochondrial coenzyme A diphosphatase NUDT8 (236 aa).

A Nudix hydrolase domain is found at 25–172 (LRARPASAAV…HFRYTLPVFL (148 aa)). Position 70 is an N6-succinyllysine (Lys70). Residues 70–91 (KCDPADQDVVHTALRETREELG) carry the Nudix box motif. Residues Glu85 and Glu89 each contribute to the Mg(2+) site.

It belongs to the Nudix hydrolase family. Monomer. It depends on Mg(2+) as a cofactor. Mn(2+) serves as cofactor.

Its subcellular location is the mitochondrion. It carries out the reaction an acyl-CoA + H2O = an acyl-4'-phosphopantetheine + adenosine 3',5'-bisphosphate + 2 H(+). The enzyme catalyses CoA + H2O = (R)-4'-phosphopantetheine + adenosine 3',5'-bisphosphate + 2 H(+). It catalyses the reaction acetyl-CoA + H2O = S-acetyl-4'-phosphopantetheine + adenosine 3',5'-bisphosphate + 2 H(+). The catalysed reaction is butanoyl-CoA + H2O = S-butanoyl-4'-phosphopantetheine + adenosine 3',5'-bisphosphate + 2 H(+). It carries out the reaction hexanoyl-CoA + H2O = hexanoyl-4'-phosphopantetheine + adenosine 3',5'-bisphosphate + 2 H(+). The enzyme catalyses octanoyl-CoA + H2O = S-octanoyl-4'-phosphopantetheine + adenosine 3',5'-bisphosphate + 2 H(+). It catalyses the reaction propanoyl-CoA + H2O = propanoyl-4'-phosphopantetheine + adenosine 3',5'-bisphosphate + 2 H(+). The catalysed reaction is malonyl-CoA + H2O = malonyl-4'-phosphopantetheine + adenosine 3',5'-bisphosphate + 2 H(+). It carries out the reaction succinyl-CoA + H2O = succinyl-4'-phosphopantetheine + adenosine 3',5'-bisphosphate + 2 H(+). The enzyme catalyses a 5'-end CoA-ribonucleoside in mRNA + H2O = a 5'-end phospho-adenosine-phospho-ribonucleoside in mRNA + (R)-4'-phosphopantetheine + 2 H(+). In terms of biological role, acyl-CoA diphosphatase that mediates the hydrolysis of a wide range of CoA and CoA esters yielding 3',5'-ADP and the corresponding 4'-phosphopantetheine derivative as products. Hydrolyzes short- and medium-chain acyl-CoAs, exhibiting the highest activity toward free CoA, hexanoyl-CoA, and octanoyl-CoA and the lowest activity against acetyl-CoA. Exhibits decapping activity towards dpCoA-capped RNAs in vitro. The polypeptide is Mitochondrial coenzyme A diphosphatase NUDT8 (NUDT8) (Homo sapiens (Human)).